The sequence spans 65 residues: Large ribosomal subunit protein bL31 (65 aa).

Zn(2+)-binding residues include Cys16, Cys18, Cys36, and Cys39.

Belongs to the bacterial ribosomal protein bL31 family. Type A subfamily. In terms of assembly, part of the 50S ribosomal subunit. Zn(2+) is required as a cofactor.

Its function is as follows. Binds the 23S rRNA. The chain is Large ribosomal subunit protein bL31 from Geobacter sulfurreducens (strain ATCC 51573 / DSM 12127 / PCA).